A 667-amino-acid chain; its full sequence is E3 ubiquitin-protein ligase Midline-1 (667 aa).

The segment at 10 to 60 adopts an RING-type zinc-finger fold; it reads CPICLELFEDPLLLPCAHSLCFNCAHRILVSHCATNEPVESINAFQCPTCR. Residues Ser-92 and Ser-96 each carry the phosphoserine modification. B box-type zinc fingers lie at residues 116–165 and 172–212; these read KVLC…IEPI and GLMC…VAAL. 12 residues coordinate Zn(2+): Cys-119, Cys-122, Cys-134, Cys-137, Cys-142, Cys-145, His-150, His-159, Cys-175, His-178, Cys-198, and His-204. Residues 205–264 adopt a coiled-coil conformation; it reads RDHQVAALSERYDKLKQNLESNLTNLIKRNTELETLLAKLIQTCQHVEVNASRQEAKLTE. In terms of domain architecture, COS spans 320-379; the sequence is LKENDHARFLQTAKNITERVSMATASSQVLIPEINLNDTFDTFALDFSREKKLLECLDYL. The region spanning 381 to 484 is the Fibronectin type-III domain; sequence APNPPTIREE…EPGKLKTNSQ (104 aa). Polar residues predominate over residues 471-485; that stretch reads SRSSEPGKLKTNSQP. Residues 471 to 524 are disordered; that stretch reads SRSSEPGKLKTNSQPFKLDPKSAHRKLKVSHDNLTVERDESSSKKSHTPERFTS. The B30.2/SPRY domain maps to 482–659; it reads NSQPFKLDPK…IITGLPIPDH (178 aa). The segment covering 499 to 520 has biased composition (basic and acidic residues); that stretch reads VSHDNLTVERDESSSKKSHTPE. Ser-511 carries the post-translational modification Phosphoserine.

The protein belongs to the TRIM/RBCC family. As to quaternary structure, homodimer or heterodimer with MID2. Interacts with IGBP1.

It localises to the cytoplasm. The protein localises to the cytoskeleton. The enzyme catalyses S-ubiquitinyl-[E2 ubiquitin-conjugating enzyme]-L-cysteine + [acceptor protein]-L-lysine = [E2 ubiquitin-conjugating enzyme]-L-cysteine + N(6)-ubiquitinyl-[acceptor protein]-L-lysine.. Functionally, has E3 ubiquitin ligase activity towards IGBP1, promoting its monoubiquitination, which results in deprotection of the catalytic subunit of protein phosphatase PP2A, and its subsequent degradation by polyubiquitination. In Rattus norvegicus (Rat), this protein is E3 ubiquitin-protein ligase Midline-1 (Mid1).